We begin with the raw amino-acid sequence, 145 residues long: Zinc finger C2H2 protein ECU06_1150 (145 aa).

A C2H2-type 1; atypical zinc finger spans residues 35-57; it reads KDCARYGEAQASKHALLAHARRH. Residues 63 to 85 form a C2H2-type 2 zinc finger; sequence FECHLCGKDYTRSDPLKKHLLRH.

In Encephalitozoon cuniculi (strain GB-M1) (Microsporidian parasite), this protein is Zinc finger C2H2 protein ECU06_1150.